A 411-amino-acid polypeptide reads, in one-letter code: NADH-quinone oxidoreductase subunit H (411 aa).

A run of 9 helical transmembrane segments spans residues 18–38 (LAKS…AILI), 84–104 (WIYL…FAVI), 124–144 (LPVA…GIVL), 165–185 (VISY…YAGT), 198–218 (TWYI…MVGE), 260–280 (VSAL…PISI), 288–308 (WWPL…FMWL), 321–341 (MALG…IVAI), and 352–372 (APAT…ALLG).

Belongs to the complex I subunit 1 family. In terms of assembly, NDH-1 is composed of 14 different subunits. Subunits NuoA, H, J, K, L, M, N constitute the membrane sector of the complex.

The protein resides in the cell membrane. The catalysed reaction is a quinone + NADH + 5 H(+)(in) = a quinol + NAD(+) + 4 H(+)(out). In terms of biological role, NDH-1 shuttles electrons from NADH, via FMN and iron-sulfur (Fe-S) centers, to quinones in the respiratory chain. The immediate electron acceptor for the enzyme in this species is believed to be menaquinone. Couples the redox reaction to proton translocation (for every two electrons transferred, four hydrogen ions are translocated across the cytoplasmic membrane), and thus conserves the redox energy in a proton gradient. This subunit may bind ubiquinone. The sequence is that of NADH-quinone oxidoreductase subunit H from Mycolicibacterium vanbaalenii (strain DSM 7251 / JCM 13017 / BCRC 16820 / KCTC 9966 / NRRL B-24157 / PYR-1) (Mycobacterium vanbaalenii).